Reading from the N-terminus, the 547-residue chain is Chaperonin GroEL 1 (547 aa).

ATP-binding positions include 30 to 33 (TLGP), Lys-51, 87 to 91 (DGTTT), Gly-415, and Asp-495.

The protein belongs to the chaperonin (HSP60) family. In terms of assembly, forms a cylinder of 14 subunits composed of two heptameric rings stacked back-to-back. Interacts with the co-chaperonin GroES.

The protein localises to the cytoplasm. The catalysed reaction is ATP + H2O + a folded polypeptide = ADP + phosphate + an unfolded polypeptide.. Together with its co-chaperonin GroES, plays an essential role in assisting protein folding. The GroEL-GroES system forms a nano-cage that allows encapsulation of the non-native substrate proteins and provides a physical environment optimized to promote and accelerate protein folding. The polypeptide is Chaperonin GroEL 1 (Azorhizobium caulinodans (strain ATCC 43989 / DSM 5975 / JCM 20966 / LMG 6465 / NBRC 14845 / NCIMB 13405 / ORS 571)).